The chain runs to 445 residues: MREIVHIQAGQCGNQIGAKFWEVISDEHGIDPTGTYHGDSDLQLERINVYYNEASGGKYVPRAILVDLEPGTMDSVRAGPFGQIFRPDNFVFGQSGAGNNWAKGHYTEGAELVDSVLDVIRKEAESCDCLQGFQLTHSLGGGTGSGMGTLLISKIREEYPDRIMVTYSVVPSPKVSDTVVEPYNATLSVHQLVENTDETYCIDNEALYDICFRTLKLSNPTYGDLNHLVSATMSGVTTCLRFPGQLNADLRKLAVNMVPFPRLHFFMPGFAPLTSRGSQQYRALSVPELTQQMFDAKNMMAACDPRHGRYLTVAAIFRGRMSMKEVDEQMLNVQNKNSSYFVEWIPNNVKTAVCDIPPRGLKMSATFVGNSTAIQELFRRVSEQFTAMFRRKAFLHWYTGEGMDEMEFTEAESNMNDLVSEYQQYQDATAEDEGEFDEDEEVEEA.

Residues glutamine 11, glutamate 69, serine 138, glycine 142, threonine 143, glycine 144, asparagine 204, and asparagine 226 each contribute to the GTP site. Mg(2+) is bound at residue glutamate 69. The interval 424–445 is disordered; it reads QYQDATAEDEGEFDEDEEVEEA. Residues 429–445 are compositionally biased toward acidic residues; the sequence is TAEDEGEFDEDEEVEEA.

The protein belongs to the tubulin family. In terms of assembly, dimer of alpha and beta chains. A typical microtubule is a hollow water-filled tube with an outer diameter of 25 nm and an inner diameter of 15 nM. Alpha-beta heterodimers associate head-to-tail to form protofilaments running lengthwise along the microtubule wall with the beta-tubulin subunit facing the microtubule plus end conferring a structural polarity. Microtubules usually have 13 protofilaments but different protofilament numbers can be found in some organisms and specialized cells. The cofactor is Mg(2+).

Its subcellular location is the cytoplasm. It is found in the cytoskeleton. Tubulin is the major constituent of microtubules, a cylinder consisting of laterally associated linear protofilaments composed of alpha- and beta-tubulin heterodimers. Microtubules grow by the addition of GTP-tubulin dimers to the microtubule end, where a stabilizing cap forms. Below the cap, tubulin dimers are in GDP-bound state, owing to GTPase activity of alpha-tubulin. This Echinococcus multilocularis (Fox tapeworm) protein is Tubulin beta-2 chain (TUB-2).